The following is a 704-amino-acid chain: MAVATTAVEGVPSRGAPGEVIHLNVGGKRFSTSRQTLTWIPDSFFSSLLSGRISTLKDETGAIFIDRDPTVFAPILNFLRTKELDPRGVHGSSLLHEAQFYGLTPLVRRLQVREELDRSSCGNVLFNGYLPPPVFPVKRRNRHSLVGPQQIGGRPAPVRRSNTMPPNLGNAGLLGRMLDERAPPSPSGQPEEPGMVRLVCGHHNWIAVAYTHFLVCYRLKEASGWQLAFSSPRLDWPIERLALAARVLGGAPGEHDKMVAAATGSEILLWALQAQGGGSEIGVFHLGVPVEALFFVGNQLIATSHTGRIGVWNAVTKHWQVQEVQPITSYDAAGSFLLLGCSNGSIYYVDVQKFPLRMKDNDLLVSELYRDPAEDGVTALSVYLTPKTSDSGNWIEIAYGTSSGVVRVIVQHPETVGSGPQLFQTFSVHRSPVTKIMLSEKHLISVCADNNHVRTWSVTRFRGMISTQPGSTPLASFKILALESVDGLGGCSAGNDIGPYGERDDQQVFIQKVVPNASQLFVRLSSTGQRVCSVRSVDGSPTTAFTVLECEGSRRLGSRPRRYLLTGQANGSLAMWDLTTAMDGLGQTPAGGLTEEELMDQLEQCELSPLASSRGSFPSPSPRTSLTSLHSASSNTSLYGPRGSPSPPQAEARRRGAGSFVDRCQELARGAPELRWPPTPAPRPSTSLGNPLTALKKTLNETSF.

A2 carries the post-translational modification N-acetylalanine. Positions 19-88 constitute a BTB domain; sequence EVIHLNVGGK…LRTKELDPRG (70 aa). Residues 146–165 form a disordered region; it reads VGPQQIGGRPAPVRRSNTMP. T163 carries the post-translational modification Phosphothreonine. WD repeat units lie at residues 233–280, 283–322, 324–359, 428–466, and 548–586; these read RLDW…GGSE, VFHLGVPVEALFFVGNQLIATSHTGRIGVWNAVTKHWQVQ, VQPITSYDAAGSFLLLGCSNGSIYYVDVQKFPLRMK, VHRSPVTKIMLSEKHLISVCADNNHVRTWSVTRFRGMIS, and LECEGSRRLGSRPRRYLLTGQANGSLAMWDLTTAMDGLG. Residues 609–704 are disordered; that stretch reads PLASSRGSFP…LKKTLNETSF (96 aa). Low complexity predominate over residues 612 to 631; that stretch reads SSRGSFPSPSPRTSLTSLHS. Residues 618–623 carry the PXXXPR motif; the sequence is PSPSPR. A phosphoserine mark is found at S644 and S646. Residues 678 to 683 carry the PXXXPR motif; the sequence is PTPAPR. T693 carries the phosphothreonine modification.

The protein belongs to the KCTD3 family. As to quaternary structure, monomer. Interacts with CUL3; interaction is direct and forms a 5:5 heterodecamer. Interacts (via PXXXPR motifs) with SH3KBP1 (via SH3 domains). Directly interacts with cathepsin B/CTSB.

Its subcellular location is the lysosome. In terms of biological role, inhibits CBL-SH3KBP1 complex mediated down-regulation of EGFR signaling by sequestration of SH3KBP1. Binds to SH3KBP1 and prevents its interaction with CBL and inhibits translocation of SH3KBP1 to EGFR containing vesicles upon EGF stimulation. The sequence is that of SH3KBP1-binding protein 1 (Shkbp1) from Mus musculus (Mouse).